Here is a 550-residue protein sequence, read N- to C-terminus: Copine-F (550 aa).

2 consecutive C2 domains span residues 1–115 (MAET…RLIG) and 123–246 (ITGK…PIIN). A VWFA domain is found at 296–521 (DLMVAIDCTE…DFQNEILRKL (226 aa)).

The protein belongs to the copine family.

The sequence is that of Copine-F (cpnF) from Dictyostelium discoideum (Social amoeba).